Here is a 160-residue protein sequence, read N- to C-terminus: Transcription antitermination protein NusB (160 aa).

This sequence belongs to the NusB family.

In terms of biological role, involved in transcription antitermination. Required for transcription of ribosomal RNA (rRNA) genes. Binds specifically to the boxA antiterminator sequence of the ribosomal RNA (rrn) operons. The protein is Transcription antitermination protein NusB of Salinibacter ruber (strain DSM 13855 / M31).